An 89-amino-acid chain; its full sequence is Small ribosomal subunit protein bS16 (89 aa).

It belongs to the bacterial ribosomal protein bS16 family.

The chain is Small ribosomal subunit protein bS16 from Geobacillus stearothermophilus (Bacillus stearothermophilus).